The primary structure comprises 142 residues: MAKKVVGLVKLAINAGKANPAPPVGPALGQHGVNIMAFCKEYNERTKDQAGLIIPVEITVYEDRSFTFITKTPPASILLKKAANINSGSSEPNRKKVAQVSKTKVREIAETKMKDLNAASVEAAMSMVEGTARSMGITIVEG.

Belongs to the universal ribosomal protein uL11 family. Part of the ribosomal stalk of the 50S ribosomal subunit. Interacts with L10 and the large rRNA to form the base of the stalk. L10 forms an elongated spine to which L12 dimers bind in a sequential fashion forming a multimeric L10(L12)X complex. Post-translationally, one or more lysine residues are methylated.

Forms part of the ribosomal stalk which helps the ribosome interact with GTP-bound translation factors. The sequence is that of Large ribosomal subunit protein uL11 from Desulfitobacterium hafniense (strain DSM 10664 / DCB-2).